The sequence spans 497 residues: Cytochrome P450 71A14 (497 aa).

Residues 3 to 23 (MIIISLCLATILALLLLKQFL) traverse the membrane as a helical segment. Position 440 (Cys440) interacts with heme.

The protein belongs to the cytochrome P450 family. It depends on heme as a cofactor.

Its subcellular location is the membrane. This is Cytochrome P450 71A14 (CYP71A14) from Arabidopsis thaliana (Mouse-ear cress).